Reading from the N-terminus, the 410-residue chain is LL-diaminopimelate aminotransferase (410 aa).

Residues Tyr-15 and Gly-42 each coordinate substrate. Pyridoxal 5'-phosphate is bound by residues Tyr-72, 108–109 (TK), Tyr-132, Asn-186, Tyr-217, and 245–247 (SFS). Substrate-binding residues include Lys-109, Tyr-132, and Asn-186. N6-(pyridoxal phosphate)lysine is present on Lys-248. Pyridoxal 5'-phosphate contacts are provided by Arg-256 and Asn-291. The substrate site is built by Asn-291 and Arg-387.

This sequence belongs to the class-I pyridoxal-phosphate-dependent aminotransferase family. LL-diaminopimelate aminotransferase subfamily. As to quaternary structure, homodimer. Requires pyridoxal 5'-phosphate as cofactor.

The catalysed reaction is (2S,6S)-2,6-diaminopimelate + 2-oxoglutarate = (S)-2,3,4,5-tetrahydrodipicolinate + L-glutamate + H2O + H(+). Its pathway is amino-acid biosynthesis; L-lysine biosynthesis via DAP pathway; LL-2,6-diaminopimelate from (S)-tetrahydrodipicolinate (aminotransferase route): step 1/1. Its function is as follows. Involved in the synthesis of meso-diaminopimelate (m-DAP or DL-DAP), required for both lysine and peptidoglycan biosynthesis. Catalyzes the direct conversion of tetrahydrodipicolinate to LL-diaminopimelate. In Lawsonia intracellularis (strain PHE/MN1-00), this protein is LL-diaminopimelate aminotransferase.